Here is a 597-residue protein sequence, read N- to C-terminus: 2-succinyl-5-enolpyruvyl-6-hydroxy-3-cyclohexene-1-carboxylate synthase (597 aa).

This sequence belongs to the TPP enzyme family. MenD subfamily. Homodimer. Requires Mg(2+) as cofactor. Mn(2+) is required as a cofactor. Thiamine diphosphate serves as cofactor.

It catalyses the reaction isochorismate + 2-oxoglutarate + H(+) = 5-enolpyruvoyl-6-hydroxy-2-succinyl-cyclohex-3-ene-1-carboxylate + CO2. It functions in the pathway quinol/quinone metabolism; 1,4-dihydroxy-2-naphthoate biosynthesis; 1,4-dihydroxy-2-naphthoate from chorismate: step 2/7. Its pathway is cofactor biosynthesis; phylloquinone biosynthesis. Catalyzes the thiamine diphosphate-dependent decarboxylation of 2-oxoglutarate and the subsequent addition of the resulting succinic semialdehyde-thiamine pyrophosphate anion to isochorismate to yield 2-succinyl-5-enolpyruvyl-6-hydroxy-3-cyclohexene-1-carboxylate (SEPHCHC). This Synechococcus sp. (strain JA-3-3Ab) (Cyanobacteria bacterium Yellowstone A-Prime) protein is 2-succinyl-5-enolpyruvyl-6-hydroxy-3-cyclohexene-1-carboxylate synthase.